The chain runs to 155 residues: Large ribosomal subunit protein uL16 (155 aa).

Positions 1-22 are disordered; it reads MLSPKRTKYRKQQRGRMKGKAT.

It belongs to the universal ribosomal protein uL16 family. As to quaternary structure, part of the 50S ribosomal subunit.

Its function is as follows. Binds 23S rRNA and is also seen to make contacts with the A and possibly P site tRNAs. This Synechococcus sp. (strain JA-2-3B'a(2-13)) (Cyanobacteria bacterium Yellowstone B-Prime) protein is Large ribosomal subunit protein uL16.